The following is an 83-amino-acid chain: Conotoxin MiEr92 (83 aa).

The signal sequence occupies residues 1 to 22 (MKLTCVLIVIMLFLTVCPLITA). The propeptide occupies 23 to 49 (DHSRDKQEHPAMRLKDRIRYLRRGKLT). 3 disulfide bridges follow: Cys52-Cys67, Cys59-Cys72, and Cys66-Cys81.

The protein belongs to the conotoxin O1 superfamily. As to expression, expressed by the venom duct.

The protein localises to the secreted. This Conus miles (Soldier cone) protein is Conotoxin MiEr92.